The primary structure comprises 343 residues: Ornithine carbamoyltransferase (343 aa).

Carbamoyl phosphate-binding positions include 62–65, Q89, R113, and 140–143; these read STRT and HPTQ. L-ornithine is bound by residues N172, D236, and 240–241; that span reads SM. Residues 278–279 and R323 each bind carbamoyl phosphate; that span reads CL.

Belongs to the aspartate/ornithine carbamoyltransferase superfamily. OTCase family.

Its subcellular location is the cytoplasm. The enzyme catalyses carbamoyl phosphate + L-ornithine = L-citrulline + phosphate + H(+). Its pathway is amino-acid degradation; L-arginine degradation via ADI pathway; carbamoyl phosphate from L-arginine: step 2/2. Its function is as follows. Reversibly catalyzes the transfer of the carbamoyl group from carbamoyl phosphate (CP) to the N(epsilon) atom of ornithine (ORN) to produce L-citrulline. The protein is Ornithine carbamoyltransferase of Levilactobacillus brevis (strain ATCC 367 / BCRC 12310 / CIP 105137 / JCM 1170 / LMG 11437 / NCIMB 947 / NCTC 947) (Lactobacillus brevis).